A 1212-amino-acid polypeptide reads, in one-letter code: MVDVNRFKSMQITLASPTKVRSWSYGEVKKPETINYRTLKPEREGLFDEVIFGPTKDWECACGKYKRIRYKGIVCDRCGVEVTRAKVRRERMGHIELKAPVSHIWYFKGIPSRMGLTLDMSPRALEEVIYFAAYVVIDPKETPLERKSLLTEREYREKLQEYGQGSFVAKMGAEAIQDLLKQVDLEAEIAELKEELKTATGQKRFKAVRRLDVLDAFYKSGNKPEWMVLNILPVLPPDLRPMVQLDGGRFAASDLNDLYRRVINRNNRLARLLELGAPGIIVQNEKRMLQEAVDALIDNGRRGRPITGPGSRPLKSLSHMLKGKQGRFRQNLLGKRVDFSGRSVIAVGPTLKMYQCGVPRLMAIELFKPFVMREIVAREYAGNVKAAKRMVERGDERIWDILEDVIKEHPVLLNRAPTLHRLGIQAFEPVLIDGKALRLHPLVCEAYNADFDGDQMAIHVPLSEEAQAEARLLLLAAEHILNPKDGKPVVTPSQDMVLGNYYLTMEDEGREGEGMIFKDIDEAVMAYHNGYVHLHSRVGIAVDSMPDKPWKENQLHKILVTTVGKILFNSIIPSEIPYLQETTNENLTDSTPDKYFLEPGQDIQTVIDSLEINAPFKKKHLGNIIAEIFKRLRTTETSAFLDRLKDLGYYYSTLAGLTVGIADIPVIDNKQEIIDAAHHRVEEINKAFRRGLMTEDDRYVAVTTTWREAKDALEKRLIETQDPKNPIVMMMDSGARGNISNFSQLAGMRGLMAAPNGRIMELPILSNFREGLSVLEMFFSTHGARKGMTDTALKTADSGYLTRRLVDVAQDVIIREDDCGTDRGLVIRAITDGKEVTETLEERLFGRYTKKSVKHPETGEVIVGPDTLITEDMAAAIVNAGVEEVTIRSVFTCKTRHGVCRHCYGINLATGDAVEVGEAVGTIAAQSIGEPGTQLTMRTFHTGGVASNTDITQGLPRIQEIFEARNPKGEAVITEVKGTVIEIEEDAATRTKKVFVQGKTGMGEYVVPFTARMKVEVGDEVHRGEALTEGSIQPKRLLEVRDTLSVETYLLAEVQKVYRSQGVEIGDKHVEVMVRQMLRKVRVMDPGDTDLLPGTLMDISDFTDANKDIVISGGVPATSRPVLLGITKASLETNSFLSAASFQETTRVLTDAAIRGKKDHLIGLKENVIIGKIIPAGTGMARYRNIEPLAVNEVEVIENIAVDEAIVESSED.

C60, C62, C75, and C78 together coordinate Zn(2+). The Mg(2+) site is built by D450, D452, and D454. C819, C893, C900, and C903 together coordinate Zn(2+).

Belongs to the RNA polymerase beta' chain family. As to quaternary structure, the RNAP catalytic core consists of 2 alpha, 1 beta, 1 beta' and 1 omega subunit. When a sigma factor is associated with the core the holoenzyme is formed, which can initiate transcription. Requires Mg(2+) as cofactor. The cofactor is Zn(2+).

The enzyme catalyses RNA(n) + a ribonucleoside 5'-triphosphate = RNA(n+1) + diphosphate. Functionally, DNA-dependent RNA polymerase catalyzes the transcription of DNA into RNA using the four ribonucleoside triphosphates as substrates. This Streptococcus thermophilus (strain CNRZ 1066) protein is DNA-directed RNA polymerase subunit beta'.